Here is a 546-residue protein sequence, read N- to C-terminus: MTPSELRRLYSIVRVLLSYGLDELIPKMRLTFPLRAGRRLLFWLPNRHRNMPLGERLRLALQELGPVWIKFGQMMSTRRDLFPPAIADQLAMLQDKVEPFDGKLAREQIELSMGGIPLEEWFDDFDIKPLASASIAQVHTACLKSTGKEIVIKVIRPDILPVIKADMRLMKRLAGWLPRLLPDGRRLRPREVVLEYEKTLLDELNLLREAANAIQLRRNFENSPMLYVPEIYSDYCSEGMLVMERIYGIPVSDVDALKANGTDMKLLAERGVQVFFTQVFRDSFFHADMHPGNIFISYEHPEDPQYIGIDCGIVGSLNKEDKRYLAENFIAFFNRDYRKVAELHVDSGWVPADTNVADFEFAIRTVCEPIFEKPLAEISFGHVLLNLFNTARRFNMEVQPQLVLLQKTLLYIEGVGRQLYPQLDLWKTAKPFLETWMKRQVGLPAVFRALKEKAPFWAEKLPEVPELFYDGLRQHKMLKHSVDQLAYELKTQQARQGQSRYLLGIGATLLISGTLLLISRVEADMVPAGLMAAGIVTWIIGWRRTR.

Residues D124–L502 form the Protein kinase domain. ATP-binding positions include L130–V138 and K153. Catalysis depends on D288, which acts as the Proton acceptor. The next 2 membrane-spanning stretches (helical) occupy residues S499–S519 and V521–G541.

Belongs to the ABC1 family. UbiB subfamily.

It is found in the cell inner membrane. It functions in the pathway cofactor biosynthesis; ubiquinone biosynthesis [regulation]. Its function is as follows. Is probably a protein kinase regulator of UbiI activity which is involved in aerobic coenzyme Q (ubiquinone) biosynthesis. This Pectobacterium carotovorum subsp. carotovorum (strain PC1) protein is Probable protein kinase UbiB.